A 333-amino-acid chain; its full sequence is Structure-specific endonuclease subunit SLX1 homolog (333 aa).

Positions 68 to 157 (DFFGVYCLLS…KSRRLRLLNL (90 aa)) constitute a GIY-YIG domain. The SLX1-type zinc-finger motif lies at 237 to 293 (CSLCLKPILSISELLRCHANETCKSHFHMRCLSKHALNAVDEYRTSLFPIQGQCPKC).

This sequence belongs to the SLX1 family. As to quaternary structure, forms a heterodimer with a member of the SLX4 family. It depends on a divalent metal cation as a cofactor.

It localises to the nucleus. In terms of biological role, catalytic subunit of a heterodimeric structure-specific endonuclease that resolves DNA secondary structures generated during DNA repair and recombination. Has endonuclease activity towards branched DNA substrates, introducing single-strand cuts in duplex DNA close to junctions with ss-DNA. This is Structure-specific endonuclease subunit SLX1 homolog from Brugia malayi (Filarial nematode worm).